A 498-amino-acid polypeptide reads, in one-letter code: Protein translocase subunit SecY (498 aa).

10 helical membrane passes run 23-43 (FVIS…ISVI), 65-87 (FDLF…VGIS), 124-144 (ITRF…IALI), 163-183 (AFYI…GDII), 191-211 (GITL…FIVM), 229-249 (AINF…ISFV), 281-301 (AAGV…ITIA), 322-342 (PVGI…YSYI), 382-402 (FIGA…SLVL), and 406-426 (TTLS…MELY). Residues 478–488 (VEPTQDKKKNP) are compositionally biased toward basic and acidic residues. Residues 478–498 (VEPTQDKKKNPSDPLEVSQLW) are disordered.

It belongs to the SecY/SEC61-alpha family. As to quaternary structure, component of the Sec protein translocase complex. Heterotrimer consisting of SecY, SecE and SecG subunits. The heterotrimers can form oligomers, although 1 heterotrimer is thought to be able to translocate proteins. Interacts with the ribosome. Interacts with SecDF, and other proteins may be involved. Interacts with SecA.

Its subcellular location is the cell membrane. The central subunit of the protein translocation channel SecYEG. Consists of two halves formed by TMs 1-5 and 6-10. These two domains form a lateral gate at the front which open onto the bilayer between TMs 2 and 7, and are clamped together by SecE at the back. The channel is closed by both a pore ring composed of hydrophobic SecY resides and a short helix (helix 2A) on the extracellular side of the membrane which forms a plug. The plug probably moves laterally to allow the channel to open. The ring and the pore may move independently. The protein is Protein translocase subunit SecY of Mycoplasmoides gallisepticum (strain R(low / passage 15 / clone 2)) (Mycoplasma gallisepticum).